We begin with the raw amino-acid sequence, 118 residues long: UPF0102 protein Dtur_1530 (118 aa).

This sequence belongs to the UPF0102 family.

This is UPF0102 protein Dtur_1530 from Dictyoglomus turgidum (strain DSM 6724 / Z-1310).